The chain runs to 545 residues: EH domain-containing protein 1 (545 aa).

EF-hand domains are found at residues 14–49 (ENQMIYKEWFEFSDSDGDGRITGNDAIKFFTMSNLP) and 50–83 (RPELKQIWAIADSKRQGYLGFKEFIVAMQLVSLA). The region spanning 15–93 (NQMIYKEWFE…QTGHEISHEV (79 aa)) is the EH domain. The Ca(2+) site is built by Asp27, Asp29, Asp31, Arg33, Asp38, Asp61, Tyr67, and Glu72. Residues 194-429 (FDAKPMVMLL…DLLADLKDIP (236 aa)) form the Dynamin-type G domain. The G1 motif stretch occupies residues 204-211 (GQYSTGKT). 204–211 (GQYSTGKT) contributes to the GTP binding site. The G2 motif stretch occupies residues 230–231 (EP). The interval 292–295 (DTPG) is G3 motif. Residues 309–313 (DFTGV) and Lys359 contribute to the GTP site. The segment at 358 to 361 (NKAD) is G4 motif. A region of interest (G5 motif) is located at residue Val382. GTP is bound at residue 395 to 398 (SFSD). Residues 467 to 490 (KAKAQQKLIDNLEDEFGKVQREHH) are a coiled coil.

It belongs to the TRAFAC class dynamin-like GTPase superfamily. Dynamin/Fzo/YdjA family. EHD subfamily. Homooligomer, and heterooligomer with EHD2.

It is found in the endosome membrane. It localises to the cell membrane. The protein localises to the cytoplasm. The catalysed reaction is GTP + H2O = GDP + phosphate + H(+). In terms of biological role, involved in endocytosis positive regulation. Acts in early endocytic membrane fusion and membrane trafficking of recycling endosomes. Confers salt tolerance. The polypeptide is EH domain-containing protein 1 (Arabidopsis thaliana (Mouse-ear cress)).